The primary structure comprises 681 residues: NAD(P)H-quinone oxidoreductase chain 5 (681 aa).

The next 16 membrane-spanning stretches (helical) occupy residues 7-27 (LAWL…IGLI), 39-59 (INAV…GALL), 89-109 (IDHL…LVMI), 120-140 (GYVR…GLVI), 144-164 (LVQV…LIGF), 188-208 (GLLL…FGTI), 219-239 (GVLS…GPVA), 258-278 (TPIS…FLVA), 289-309 (VVMN…ATIA), 327-347 (LGYM…FHLM), 352-372 (FKAM…GVVG), 395-415 (ATCF…AGFW), 420-440 (ILGL…ATAG), 509-529 (LTMT…GLLG), 558-578 (FYVM…VASL), and 660-680 (AQFY…VFSL).

This sequence belongs to the complex I subunit 5 family.

The protein localises to the cell membrane. The enzyme catalyses a plastoquinone + NADH + (n+1) H(+)(in) = a plastoquinol + NAD(+) + n H(+)(out). The catalysed reaction is a plastoquinone + NADPH + (n+1) H(+)(in) = a plastoquinol + NADP(+) + n H(+)(out). Its function is as follows. NDH-1 shuttles electrons from NAD(P)H, via FMN and iron-sulfur (Fe-S) centers, to quinones in the respiratory chain. The immediate electron acceptor for the enzyme in this species is believed to be plastoquinone. Couples the redox reaction to proton translocation (for every two electrons transferred, four hydrogen ions are translocated across the cytoplasmic membrane), and thus conserves the redox energy in a proton gradient. This is NAD(P)H-quinone oxidoreductase chain 5 (ndhF) from Synechocystis sp. (strain ATCC 27184 / PCC 6803 / Kazusa).